The primary structure comprises 1108 residues: Isoleucine--tRNA ligase (1108 aa).

Residues 53–63 (PFANGLPHYGH) carry the 'HIGH' region motif. A 'KMSKS' region motif is present at residues 654–658 (KLSKR). Residue lysine 657 participates in ATP binding.

It belongs to the class-I aminoacyl-tRNA synthetase family. IleS type 2 subfamily. As to quaternary structure, monomer. Requires Zn(2+) as cofactor.

It localises to the cytoplasm. The enzyme catalyses tRNA(Ile) + L-isoleucine + ATP = L-isoleucyl-tRNA(Ile) + AMP + diphosphate. Its function is as follows. Catalyzes the attachment of isoleucine to tRNA(Ile). As IleRS can inadvertently accommodate and process structurally similar amino acids such as valine, to avoid such errors it has two additional distinct tRNA(Ile)-dependent editing activities. One activity is designated as 'pretransfer' editing and involves the hydrolysis of activated Val-AMP. The other activity is designated 'posttransfer' editing and involves deacylation of mischarged Val-tRNA(Ile). This is Isoleucine--tRNA ligase from Rickettsia bellii (strain OSU 85-389).